An 81-amino-acid polypeptide reads, in one-letter code: Xenopsin peptides (81 aa).

A signal peptide spans 1–20 (MYKGIFLCVLLAVICANSLA). Residues 21–37 (TPSSDADEDNDEVERYV) constitute a propeptide that is removed on maturation. A propeptide spans 65 to 73 (EAMLRSAEA) (removed in mature form by a dipeptidylpeptidase).

It belongs to the gastrin/cholecystokinin family. Magainin subfamily. As to expression, XPF is synthesized in the stomach and stored in a novel granular multinucleated cell in the gastric mucosa, it is stored as active, processed peptides in large granules within the granular gland secretions of the skin.

It localises to the secreted. Functionally, xenopsin is a neurotensin-like octapeptide. XPF has antimicrobial activity. The polypeptide is Xenopsin peptides (Xenopus laevis (African clawed frog)).